The chain runs to 591 residues: V-type ATP synthase alpha chain (591 aa).

233–240 (GPFGAGKT) is an ATP binding site.

It belongs to the ATPase alpha/beta chains family.

The enzyme catalyses ATP + H2O + 4 H(+)(in) = ADP + phosphate + 5 H(+)(out). In terms of biological role, produces ATP from ADP in the presence of a proton gradient across the membrane. The V-type alpha chain is a catalytic subunit. This Streptococcus pyogenes serotype M2 (strain MGAS10270) protein is V-type ATP synthase alpha chain.